The chain runs to 164 residues: Phospholipase A and acyltransferase 4 (164 aa).

An essential for its ability regulate keratinocyte differentiation region spans residues 1–40; that stretch reads MASPHQEPKPGDLIEIFRLGYEHWALYIGDGYVIHLAPPS. At 1–134 the chain is on the cytoplasmic side; sequence MASPHQEPKP…SRCKQVEKAK (134 aa). Residues 13–129 enclose the LRAT domain; sequence LIEIFRLGYE…LRYGKSRCKQ (117 aa). Residues His23 and His35 contribute to the active site. Catalysis depends on Cys113, which acts as the Acyl-thioester intermediate. Positions 124 to 164 are interaction with TGM1; sequence KSRCKQVEKAKVEVGVATALGILVVAGCSFAIRRYQKKATA. A helical membrane pass occupies residues 135–155; sequence VEVGVATALGILVVAGCSFAI. Residues 156–164 are Lumenal-facing; the sequence is RRYQKKATA.

The protein belongs to the H-rev107 family. Interacts with TGM1. In terms of tissue distribution, widely expressed.

It is found in the membrane. It catalyses the reaction a 1,2-diacyl-sn-glycero-3-phosphocholine + H2O = a 1-acyl-sn-glycero-3-phosphocholine + a fatty acid + H(+). The catalysed reaction is a 1,2-diacyl-sn-glycero-3-phosphocholine + H2O = a 2-acyl-sn-glycero-3-phosphocholine + a fatty acid + H(+). It carries out the reaction 1,2-dihexadecanoyl-sn-glycero-3-phosphocholine + H2O = 1-hexadecanoyl-sn-glycero-3-phosphocholine + hexadecanoate + H(+). The enzyme catalyses 1,2-dihexadecanoyl-sn-glycero-3-phosphocholine + H2O = 2-hexadecanoyl-sn-glycero-3-phosphocholine + hexadecanoate + H(+). It catalyses the reaction 1-hexadecanoyl-2-(9Z-octadecenoyl)-sn-glycero-3-phosphocholine + H2O = 2-(9Z-octadecenoyl)-sn-glycero-3-phosphocholine + hexadecanoate + H(+). The catalysed reaction is 1-hexadecanoyl-2-(9Z-octadecenoyl)-sn-glycero-3-phosphocholine + H2O = 1-hexadecanoyl-sn-glycero-3-phosphocholine + (9Z)-octadecenoate + H(+). It carries out the reaction 1-hexadecanoyl-2-(5Z,8Z,11Z,14Z-eicosatetraenoyl)-sn-glycero-3-phosphocholine + H2O = 2-(5Z,8Z,11Z,14Z)-eicosatetraenoyl-sn-glycero-3-phosphocholine + hexadecanoate + H(+). The enzyme catalyses 1-hexadecanoyl-2-(9Z,12Z-octadecadienoyl)-sn-glycero-3-phosphoethanolamine + H2O = 1-hexadecanoyl-sn-glycero-3-phosphoethanolamine + (9Z,12Z)-octadecadienoate + H(+). It catalyses the reaction 1-hexadecanoyl-2-(9Z,12Z-octadecadienoyl)-sn-glycero-3-phosphoethanolamine + H2O = 2-(9Z,12Z)-octadecadienoyl-sn-glycero-3-phosphoethanolamine + hexadecanoate + H(+). The catalysed reaction is 1-hexadecanoyl-2-(5Z,8Z,11Z,14Z-eicosatetraenoyl)-sn-glycero-3-phosphoethanolamine + H2O = 2-(5Z,8Z,11Z,14Z)-eicosatetraenoyl-sn-glycero-3-phosphoethanolamine + hexadecanoate + H(+). It carries out the reaction 1-hexanoyl-2-acyl-sn-glycero-3-phosphocholine + H2O = hexanoate + a 2-acyl-sn-glycero-3-phosphocholine + H(+). The enzyme catalyses 1,2-diheptadecanoyl-sn-glycero-3-phosphoethanolamine + 1-(9Z-octadecenoyl)-2-hexadecanoyl-sn-glycero-3-phosphocholine = 1,2-diheptadecanoyl-sn-glycero-3-phospho-N-hexadecanoyl-ethanolamine + 1-(9Z-octadecenoyl)-sn-glycero-3-phosphocholine + H(+). It catalyses the reaction 1,2-diheptadecanoyl-sn-glycero-3-phosphoethanolamine + 1-(9Z-octadecenoyl)-2-hexadecanoyl-sn-glycero-3-phosphocholine = 1,2-diheptadecanoyl-sn-glycero-3-phospho-N-(9Z-octadecenoyl)-ethanolamine + 2-hexadecanoyl-sn-glycero-3-phosphocholine + H(+). Exhibits both phospholipase A1/2 and acyltransferase activities. Shows phospholipase A1 (PLA1) and A2 (PLA2), catalyzing the calcium-independent release of fatty acids from the sn-1 or sn-2 position of glycerophospholipids. For most substrates, PLA1 activity is much higher than PLA2 activity. Shows O-acyltransferase activity, catalyzing the transfer of a fatty acyl group from glycerophospholipid to the hydroxyl group of lysophospholipid. Shows N-acyltransferase activity, catalyzing the calcium-independent transfer of a fatty acyl group at the sn-1 position of phosphatidylcholine (PC) and other glycerophospholipids to the primary amine of phosphatidylethanolamine (PE), forming N-acylphosphatidylethanolamine (NAPE), which serves as precursor for N-acylethanolamines (NAEs). Promotes keratinocyte differentiation via activation of TGM1. This chain is Phospholipase A and acyltransferase 4, found in Homo sapiens (Human).